The sequence spans 217 residues: Peptidyl-tRNA hydrolase (217 aa).

Tyr-14 is a tRNA binding site. His-19 (proton acceptor) is an active-site residue. Residues Tyr-64, Asn-66, and Asn-113 each coordinate tRNA. The interval Met-182–Gly-217 is disordered. Low complexity predominate over residues Ala-202–Gly-217.

This sequence belongs to the PTH family. In terms of assembly, monomer.

The protein localises to the cytoplasm. The catalysed reaction is an N-acyl-L-alpha-aminoacyl-tRNA + H2O = an N-acyl-L-amino acid + a tRNA + H(+). Functionally, hydrolyzes ribosome-free peptidyl-tRNAs (with 1 or more amino acids incorporated), which drop off the ribosome during protein synthesis, or as a result of ribosome stalling. Its function is as follows. Catalyzes the release of premature peptidyl moieties from peptidyl-tRNA molecules trapped in stalled 50S ribosomal subunits, and thus maintains levels of free tRNAs and 50S ribosomes. The chain is Peptidyl-tRNA hydrolase from Roseiflexus sp. (strain RS-1).